The sequence spans 439 residues: MTTYFDKIEKISFEGEKSTNPFAFKHYDANQVILGKTMAEHLRLAVCYWHTFCWNGNDMFGLGSLERSWQKNPNVLAGAEQKADIAFEFLNKLGVPYYCFHDVDIAPEGNSVREYVQNFHHIVDILERKQVETGVKLLWGTANCFTNPRYMSGAATNPNPEVFAWAATQVFNAMNATQRLGGENYVLWGGREGYETLLNTDLKREREQIGRFMQMVVEHKHKIGFKGTLLIEPKPQEPTKHQYDYDVATVYGFLKQFGLEKEIKVNIEANHATLAGHTFQHEIATACALDIFGSIDANRGDPQLGWDTDQFPNSVEENTLVMYEILKHGGFTTGGFNFDAKIRRQSIDPYDLFYAHIGAIDVLALSLKRAAKMLQEKTLQKIVNARYAGWNSELGQHILQGKTSLETLAQLVQQKDLAPKPVSGQQEYLENLVNQVIYS.

Active-site residues include histidine 101 and aspartate 104. Glutamate 232, glutamate 268, histidine 271, aspartate 296, aspartate 307, aspartate 309, and aspartate 339 together coordinate Mg(2+).

The protein belongs to the xylose isomerase family. Homotetramer. Requires Mg(2+) as cofactor.

It localises to the cytoplasm. The catalysed reaction is alpha-D-xylose = alpha-D-xylulofuranose. The sequence is that of Xylose isomerase from Haemophilus influenzae (strain 86-028NP).